Reading from the N-terminus, the 464-residue chain is MTKNISRDRHVAVLPFPFSSHAGRLLTLVRRLAAAAPNVTFSFYSTPKSIESLFSPAERVPGNVRPYAVPDGVPEGHVFSGEPVEHVNLYLTAVGEGESLRGVLKAAEAETGRRIGCVMSDAFMWFAGDLAEEMGVPWVPFMAGGANSITAHFYTDLIRETVGMHDIVGRENDIVKFIPGFSELRLGDLPTGVLFGNLESPFAIMLHKMGRALPKATAIAINSFEELDPDIIQDLKSKFKMILNVSPFSAISLPSSPPPPPTSYTDEYGCMPWLDNRKAASVAYIGFGTLATPPPVEIAALAEALEASGTPFLWSLKDNPKEFFPEGFIKRTSERQKIVPWAPQEQVLAHGSVGVFVTHCGWNSALESIAAGVPLIGRPFFGDHQLNAWLVENVWKIGVRVEGGVFTKSGTMSALELVLTHEKQKELRARVEMFKKLALKAVGPEQSSTRNLHTLLEIVAGYNL.

An anthocyanidin contacts are provided by serine 19 and histidine 21. Histidine 21 acts as the Proton acceptor in catalysis. An N-linked (GlcNAc...) asparagine glycan is attached at asparagine 38. Aspartate 121 functions as the Charge relay in the catalytic mechanism. Residue histidine 152 participates in an anthocyanidin binding. UDP-alpha-D-glucose-binding residues include alanine 342, glutamine 344, histidine 359, tryptophan 362, asparagine 363, serine 364, and glutamate 367. Glycine 382 is an an anthocyanidin binding site. Aspartate 383 serves as a coordination point for UDP-alpha-D-glucose.

Belongs to the UDP-glycosyltransferase family. Monomer. In terms of tissue distribution, mostly expressed in leaves and flowers and, to a lower extent, in roots. In flowers, mainly observed in petals, toruses and scapes, and at lower levels in pistils and stamens.

The catalysed reaction is cyanidin + UDP-alpha-D-galactose = cyanidin 3-O-beta-D-galactoside + UDP + H(+). It catalyses the reaction cyanidin + UDP-alpha-D-glucose = cyanidin 3-O-beta-D-glucoside + UDP + H(+). It carries out the reaction delphinidin + UDP-alpha-D-glucose = delphinidin 3-O-beta-D-glucoside + UDP. The enzyme catalyses malvidin + UDP-alpha-D-glucose = malvidin 3-O-beta-D-glucoside + UDP. The catalysed reaction is delphinidin + UDP-alpha-D-galactose = delphinidin 3-O-beta-D-galactoside + UDP + H(+). It catalyses the reaction pelargonidin + UDP-alpha-D-galactose = pelargonidin 3-O-beta-D-galactoside betaine + UDP. It carries out the reaction peonidin + UDP-alpha-D-galactose = peonidin 3-O-beta-D-galactoside + UDP. The enzyme catalyses malvidin + UDP-alpha-D-galactose = malvidin 3-O-beta-D-galactoside + UDP + H(+). The catalysed reaction is petunidin + UDP-alpha-D-galactose = petunidin 3-O-beta-D-galactoside + UDP. It catalyses the reaction an anthocyanidin + UDP-alpha-D-glucose + H(+) = an anthocyanidin 3-O-beta-D-glucoside + UDP. It carries out the reaction an anthocyanidin + UDP-alpha-D-galactose = an anthocyanidin 3-O-beta-D-galactoside + UDP. The protein operates within pigment biosynthesis; anthocyanin biosynthesis. In terms of biological role, flavonoid 3-O-glycosyltransferase involved in the biosynthesis of anthocyanins conferring flower red/pink colors, mainly anthocyanidin 3-O-glycosides. Catalyzes the addition of UDP-sugar to the 3-OH of anthocyanidin, with a preference for UDP-galactose (UDP-Gal) as sugar donor and cyanidin as substrate; able to use delphinidin, pelargonidin, peonidin, malvidin and petunidin as substrates in the presence of UDP-Gal. Can also use UDP-glucose (UDP-Glu) as sugar donor with delphinidin, cyanidin and malvidin as substrates, but not active on pelargonidin, peonidin and petunidin. This is Anthocyanidin 3-O-galactosyltransferase 3GT1 from Rhododendron delavayi (Rhododendron).